The primary structure comprises 249 residues: Cell division protein FtsQ (249 aa).

Over methionine 1 to phenylalanine 6 the chain is Cytoplasmic. The chain crosses the membrane as a helical span at residues alanine 7–serine 23. The Periplasmic portion of the chain corresponds to glutamine 24–isoleucine 249. The 70-residue stretch at lysine 29 to glutamine 98 folds into the POTRA domain.

Belongs to the FtsQ/DivIB family. FtsQ subfamily. Part of a complex composed of FtsB, FtsL and FtsQ.

It is found in the cell inner membrane. In terms of biological role, essential cell division protein. May link together the upstream cell division proteins, which are predominantly cytoplasmic, with the downstream cell division proteins, which are predominantly periplasmic. May control correct divisome assembly. This Methylomonas methanica (strain DSM 25384 / MC09) protein is Cell division protein FtsQ.